The following is a 242-amino-acid chain: Small ribosomal subunit protein eS1 (242 aa).

Belongs to the eukaryotic ribosomal protein eS1 family. In terms of assembly, component of the small ribosomal subunit. Mature ribosomes consist of a small (40S) and a large (60S) subunit. The 40S subunit contains about 33 different proteins and 1 molecule of RNA (18S). The 60S subunit contains about 49 different proteins and 3 molecules of RNA (25S, 5.8S and 5S).

Its subcellular location is the cytoplasm. The sequence is that of Small ribosomal subunit protein eS1 from Lodderomyces elongisporus (strain ATCC 11503 / CBS 2605 / JCM 1781 / NBRC 1676 / NRRL YB-4239) (Yeast).